Reading from the N-terminus, the 394-residue chain is Aspergillopepsin-1 (394 aa).

The N-terminal stretch at 1 to 20 (MVVFSKVTAAVFGLATIASA) is a signal peptide. Residues 21–69 (APAPPTRKGFTVQQQARPAQKKQVNLPAMYAHALTKFGGSVPESVKVAA) constitute a propeptide, activation peptide. Positions 85–391 (YLTPVNVGGT…DSEGPRLGFA (307 aa)) constitute a Peptidase A1 domain. Catalysis depends on residues D101 and D283. A disulfide bond links C319 and C354.

It belongs to the peptidase A1 family. In terms of assembly, monomer.

It localises to the secreted. It catalyses the reaction Hydrolysis of proteins with broad specificity. Generally favors hydrophobic residues in P1 and P1', but also accepts Lys in P1, which leads to activation of trypsinogen. Does not clot milk.. Secreted aspartic endopeptidase that allows assimilation of proteinaceous substrates. The scissile peptide bond is attacked by a nucleophilic water molecule activated by two aspartic residues in the active site. Shows a broad primary substrate specificity. Favors hydrophobic residues at the P1 and P1' positions, but also accepts a lysine residue in the P1 position, leading to the activation of trypsinogen and chymotrypsinogen A. This Aspergillus clavatus (strain ATCC 1007 / CBS 513.65 / DSM 816 / NCTC 3887 / NRRL 1 / QM 1276 / 107) protein is Aspergillopepsin-1 (pepA).